Here is a 242-residue protein sequence, read N- to C-terminus: NAD(P)H-quinone oxidoreductase subunit K (242 aa).

[4Fe-4S] cluster contacts are provided by Cys-59, Cys-60, Cys-124, and Cys-155.

Belongs to the complex I 20 kDa subunit family. NDH-1 can be composed of about 15 different subunits; different subcomplexes with different compositions have been identified which probably have different functions. The cofactor is [4Fe-4S] cluster.

It is found in the cellular thylakoid membrane. The enzyme catalyses a plastoquinone + NADH + (n+1) H(+)(in) = a plastoquinol + NAD(+) + n H(+)(out). It carries out the reaction a plastoquinone + NADPH + (n+1) H(+)(in) = a plastoquinol + NADP(+) + n H(+)(out). NDH-1 shuttles electrons from an unknown electron donor, via FMN and iron-sulfur (Fe-S) centers, to quinones in the respiratory and/or the photosynthetic chain. The immediate electron acceptor for the enzyme in this species is believed to be plastoquinone. Couples the redox reaction to proton translocation, and thus conserves the redox energy in a proton gradient. Cyanobacterial NDH-1 also plays a role in inorganic carbon-concentration. The sequence is that of NAD(P)H-quinone oxidoreductase subunit K from Synechococcus sp. (strain RCC307).